The chain runs to 478 residues: Putative multidrug resistance outer membrane protein MdtQ (478 aa).

Residues 1-21 (MNRDSFYPAIACFPLLLMLAG) form the signal peptide. Residue Cys22 is the site of N-palmitoyl cysteine attachment. Cys22 carries the S-diacylglycerol cysteine lipid modification.

It belongs to the outer membrane factor (OMF) (TC 1.B.17) family.

The protein localises to the cell outer membrane. Could be involved in resistance to puromycin, acriflavine and tetraphenylarsonium chloride. In Shigella flexneri, this protein is Putative multidrug resistance outer membrane protein MdtQ (mdtQ).